Reading from the N-terminus, the 552-residue chain is Mothers against decapentaplegic homolog 4 (552 aa).

The interval 1–322 (MDNMSITNTP…PISNHPAPEY (322 aa)) is mediates interaction with ZBTB7A. One can recognise an MH1 domain in the interval 18–142 (SIVHSLMCHR…YERVVSPGID (125 aa)). Lys37 is subject to N6-acetyllysine. The interval 44 to 69 (VKKLKEKKDELDSLITAITTNGAHPS) is required for interaction with TSC22D1. Cys71 is a Zn(2+) binding site. Lys113 is covalently cross-linked (Glycyl lysine isopeptide (Lys-Gly) (interchain with G-Cter in SUMO2)). 3 residues coordinate Zn(2+): Cys115, Cys127, and His132. Positions 167–193 (EGQPSLPTEGHSIQTIQHPPSNRASTE) are disordered. Residues 177 to 193 (HSIQTIQHPPSNRASTE) show a composition bias toward polar residues. The SAD stretch occupies residues 275–320 (PYTPNLPHHQNGHLQHHPPMPPHPGHYWPVHNELAFQPPISNHPAP). An MH2 domain is found at 323-552 (WCSIAYFEMD…MPIADPQPLD (230 aa)). Lys428 and Lys507 each carry N6-acetyllysine. Lys519 participates in a covalent cross-link: Glycyl lysine isopeptide (Lys-Gly) (interchain with G-Cter in ubiquitin).

The protein belongs to the dwarfin/SMAD family. Monomer; in the absence of TGF-beta activation. Heterotrimer; on TGF-beta activation. Heterotrimer composed of two molecules of a C-terminally phosphorylated R-SMAD molecule, SMAD2 or SMAD3, and one molecule of SMAD4 to form the transcriptional active SMAD2/SMAD3-SMAD4 complex. Found in a ternary complex composed of SMAD4, STK11/LKB1 and STK11IP. Found in a complex with SMAD1 and YY1. Identified in a complex that contains at least ZNF451, SMAD2, SMAD3 and SMAD4. Interacts with ATF2, COPS5, DACH1, MSG1, SKI, STK11/LKB1, STK11IP and TRIM33. Associates with ZNF423 or ZNF521 in response to BMP2 leading to activate transcription of BMP target genes. Interacts with USP9X. Interacts with RBPMS. Interacts with WWTR1 (via coiled-coil domain). Interacts with CITED1 and CITED2. Interacts with PDPK1 (via PH domain). Interacts with VPS39; this interaction affects heterodimer formation with SMAD3, but not with SMAD2, and leads to inhibition of SMAD3-dependent transcription activation. Interactions with VPS39 and SMAD2 may be mutually exclusive. Interacts (via MH2 domain) with ZNF451 (via N-terminal zinc-finger domains). Interacts with ZC3H3. Interacts weakly with ZNF8. Interacts with NUP93 and IPO7; translocates SMAD4 to the nucleus through the NPC upon BMP7 stimulation resulting in activation of SMAD4 signaling. Interacts with CREB3L1, the interaction takes place upon TGFB1 induction and SMAD4 acts as a CREB3L1 coactivator to induce the expression of genes involved in the assembly of collagen extracellular matrix. Interacts with DLX1. Interacts with ZBTB7A; the interaction is direct and stimulated by TGFB1. Interacts with CREBBP; the recruitment of this transcriptional coactivator is negatively regulated by ZBTB7A. Interacts with EP300; the interaction with this transcriptional coactivator is negatively regulated by ZBTB7A. Interacts with HDAC1. Interacts (via MH2 domain) with ZMIZ1 (via SP-RING-type domain); in the TGF-beta signaling pathway increases the activity of the SMAD3/SMAD4 transcriptional complex. Interacts (via N-terminus) with TSC22D1. Phosphorylated by PDPK1. Post-translationally, monoubiquitinated on Lys-519 by E3 ubiquitin-protein ligase TRIM33. Monoubiquitination hampers its ability to form a stable complex with activated SMAD2/3 resulting in inhibition of TGF-beta/BMP signaling cascade. Deubiquitination by USP9X restores its competence to mediate TGF-beta signaling.

It localises to the cytoplasm. The protein resides in the nucleus. Common SMAD (co-SMAD) is the coactivator and mediator of signal transduction by TGF-beta (transforming growth factor). Component of the heterotrimeric SMAD2/SMAD3-SMAD4 complex that forms in the nucleus and is required for the TGF-mediated signaling. Promotes binding of the SMAD2/SMAD4/FAST-1 complex to DNA and provides an activation function required for SMAD1 or SMAD2 to stimulate transcription. Component of the multimeric SMAD3/SMAD4/JUN/FOS complex which forms at the AP1 promoter site; required for synergistic transcriptional activity in response to TGF-beta. Acts synergistically with SMAD1 and YY1 in bone morphogenetic protein (BMP)-mediated cardiac-specific gene expression. Binds to SMAD binding elements (SBEs) (5'-GTCT/AGAC-3') within BMP response element (BMPRE) of cardiac activating regions. May act as a tumor suppressor. Positively regulates PDPK1 kinase activity by stimulating its dissociation from the 14-3-3 protein YWHAQ which acts as a negative regulator. In muscle physiology, plays a central role in the balance between atrophy and hypertrophy. When recruited by MSTN, promotes atrophy response via phosphorylated SMAD2/4. MSTN decrease causes SMAD4 release and subsequent recruitment by the BMP pathway to promote hypertrophy via phosphorylated SMAD1/5/8. The polypeptide is Mothers against decapentaplegic homolog 4 (Smad4) (Rattus norvegicus (Rat)).